A 502-amino-acid chain; its full sequence is Protein DETOXIFICATION 7 (502 aa).

The next 12 helical transmembrane spans lie at 36–56, 68–88, 112–132, 143–163, 182–202, 208–228, 262–282, 291–311, 331–351, 375–395, 408–428, and 436–456; these read MAAP…ISMV, AVAI…VGFA, YSSM…WFFM, PLIS…LFGF, LFVS…LLVY, IVGA…LLWI, AMMI…SGLL, VISI…AIGA, AAVN…TITL, ITPI…LSGV, ASLG…CFVM, and WIGI…VTFF.

This sequence belongs to the multi antimicrobial extrusion (MATE) (TC 2.A.66.1) family.

It is found in the membrane. The protein is Protein DETOXIFICATION 7 of Arabidopsis thaliana (Mouse-ear cress).